The chain runs to 300 residues: Cation-efflux pump FieF (300 aa).

4 helical membrane-spanning segments follow: residues 12 to 32 (AAIA…FAWW), 39 to 59 (ILAA…NLLV), 82 to 102 (AALA…LTGI), and 114 to 134 (PGVG…LVSF). Aspartate 45 and aspartate 49 together coordinate Zn(2+). Zn(2+) contacts are provided by histidine 153 and aspartate 157. 2 helical membrane-spanning segments follow: residues 156–176 (SDVM…YGWH) and 178–198 (ADAL…LRMG).

The protein belongs to the cation diffusion facilitator (CDF) transporter (TC 2.A.4) family. FieF subfamily. Homodimer.

It localises to the cell inner membrane. The enzyme catalyses Zn(2+)(in) + H(+)(out) = Zn(2+)(out) + H(+)(in). The catalysed reaction is Cd(2+)(in) + H(+)(out) = Cd(2+)(out) + H(+)(in). It carries out the reaction Fe(2+)(in) + H(+)(out) = Fe(2+)(out) + H(+)(in). Divalent metal cation transporter which exports Zn(2+), Cd(2+) and possibly Fe(2+). May be involved in zinc and iron detoxification by efflux. This chain is Cation-efflux pump FieF, found in Shigella flexneri serotype 5b (strain 8401).